The chain runs to 291 residues: HTH-type transcriptional regulator CitR (291 aa).

The HTH lysR-type domain maps to 1-58 (MDFKWLHTFVTAAKYENFRKTAETLFLSQPTVTVHIKQLEKEISCKLFERKGRQIQLT). Residues 18 to 37 (FRKTAETLFLSQPTVTVHIK) constitute a DNA-binding region (H-T-H motif).

Belongs to the LysR transcriptional regulatory family.

It localises to the cytoplasm. Functionally, negative regulatory protein for the citA gene for citrate synthase I. This Bacillus subtilis (strain 168) protein is HTH-type transcriptional regulator CitR (citR).